Here is a 226-residue protein sequence, read N- to C-terminus: Ribonuclease T (226 aa).

One can recognise an Exonuclease domain in the interval 20-194; sequence VVIDVETAGF…YDTERTAELF (175 aa). Residues Asp-23, Glu-25, His-181, and Asp-186 each coordinate Mg(2+). His-181 serves as the catalytic Proton donor/acceptor.

It belongs to the RNase T family. Homodimer. Mg(2+) is required as a cofactor.

In terms of biological role, trims short 3' overhangs of a variety of RNA species, leaving a one or two nucleotide 3' overhang. Responsible for the end-turnover of tRNA: specifically removes the terminal AMP residue from uncharged tRNA (tRNA-C-C-A). Also appears to be involved in tRNA biosynthesis. This Shewanella denitrificans (strain OS217 / ATCC BAA-1090 / DSM 15013) protein is Ribonuclease T.